Here is a 317-residue protein sequence, read N- to C-terminus: UAP56-interacting factor (317 aa).

M1 is subject to N-acetylmethionine. Positions 1 to 26 are disordered; it reads MNRFGTRLVGATATPPPPPKARSNEN. T14 carries the phosphothreonine modification. A Phosphoserine modification is found at S23. A UAP56-binding motif motif is present at residues 26–44; that stretch reads NLDKIDMSLDDIIKLNRKE. S60 and S117 each carry phosphoserine. A Glycyl lysine isopeptide (Lys-Gly) (interchain with G-Cter in SUMO1) cross-link involves residue K139. Residue K260 forms a Glycyl lysine isopeptide (Lys-Gly) (interchain with G-Cter in SUMO2) linkage.

It belongs to the UIF family. As to quaternary structure, interacts with DDX39B/UAP56 and NXF1; interaction with DDX39B/UAP56 and NXF1 are mutually exclusive. Interacts with SSRP1; required for its recruitment to mRNAs. Interacts with CHTOP.

It is found in the nucleus. The protein localises to the nucleoplasm. The protein resides in the nucleus speckle. Required for mRNA export from the nucleus to the cytoplasm. Acts as an adapter that uses the DDX39B/UAP56-NFX1 pathway to ensure efficient mRNA export and delivering to the nuclear pore. Associates with spliced and unspliced mRNAs simultaneously with ALYREF/THOC4. This chain is UAP56-interacting factor (Fyttd1), found in Mus musculus (Mouse).